The primary structure comprises 419 residues: S-adenosylmethionine synthase (419 aa).

Residue H15 coordinates ATP. D17 is a binding site for Mg(2+). E43 serves as a coordination point for K(+). 2 residues coordinate L-methionine: E56 and Q100. Positions 100-110 are flexible loop; it reads QSPDIAQGVNE. Residues 171–173, 248–249, D257, 263–264, A280, and K284 contribute to the ATP site; these read DGK, KF, and RK. D257 contributes to the L-methionine binding site. An L-methionine-binding site is contributed by K288.

The protein belongs to the AdoMet synthase family. Homotetramer; dimer of dimers. Mg(2+) serves as cofactor. The cofactor is K(+).

It localises to the cytoplasm. It carries out the reaction L-methionine + ATP + H2O = S-adenosyl-L-methionine + phosphate + diphosphate. It participates in amino-acid biosynthesis; S-adenosyl-L-methionine biosynthesis; S-adenosyl-L-methionine from L-methionine: step 1/1. Catalyzes the formation of S-adenosylmethionine (AdoMet) from methionine and ATP. The overall synthetic reaction is composed of two sequential steps, AdoMet formation and the subsequent tripolyphosphate hydrolysis which occurs prior to release of AdoMet from the enzyme. This is S-adenosylmethionine synthase from Prochlorococcus marinus (strain MIT 9303).